A 616-amino-acid polypeptide reads, in one-letter code: Nucleoprotein (616 aa).

2 short sequence motifs (nuclear localization signal) span residues 230–233 (RPKR) and 473–476 (KPKK).

As to quaternary structure, homomultimerizes to form the nucleocapsid. Binds to viral genomic RNA. Protein-RNA contacts are mediated by a combination of electrostatic interactions between positively charged residues and the phosphate backbone and planar interactions between aromatic side chains and bases.

The protein resides in the virion. The protein localises to the host nucleus. Its subcellular location is the host nucleolus. Its function is as follows. Encapsidates the negative strand viral RNA, protecting it from nucleases. The encapsidated genomic RNA is termed the ribonucleoprotein (RNP) and serves as template for transcription and replication. In Gadus morhua (Atlantic cod), this protein is Nucleoprotein.